A 192-amino-acid polypeptide reads, in one-letter code: Fumarylpyruvate hydrolase (192 aa).

A divalent metal cation is bound by residues glutamate 41, glutamate 43, and aspartate 72.

This sequence belongs to the FAH family. Mg(2+) serves as cofactor. The cofactor is Mn(2+).

It catalyses the reaction 3-fumarylpyruvate + H2O = fumarate + pyruvate + H(+). Its pathway is aromatic compound metabolism; naphthalene degradation. Its function is as follows. Involved in the catabolism of gentisate (2,5-dihydroxybenzoate) a key intermediates in the aerobic pathways for the metabolism of a large number of aromatic compoun such as naphthalene. Catalyzes the hydrolytic cleavage of fumarylpyruvate to form fumarate and pyruvate. The sequence is that of Fumarylpyruvate hydrolase from Ralstonia sp.